Reading from the N-terminus, the 365-residue chain is NAD(P)H-quinone oxidoreductase subunit 1, chloroplastic (365 aa).

A run of 6 helical transmembrane segments spans residues 29–49, 106–126, 129–149, 250–270, 302–322, and 338–358; these read IWLLVPIFTLILVIIIGVLVI, IAVISTLLSYLVIPFGYHLVL, LSIGVFLWIAISSIAPIGLLM, YSGIKFGLFYVASYLNLLVSS, IFGMTIGILITLAKAYLFLFI, and LLNLGWKFLLPISLGNLLLTT.

This sequence belongs to the complex I subunit 1 family. NDH is composed of at least 16 different subunits, 5 of which are encoded in the nucleus.

The protein localises to the plastid. It localises to the chloroplast thylakoid membrane. The catalysed reaction is a plastoquinone + NADH + (n+1) H(+)(in) = a plastoquinol + NAD(+) + n H(+)(out). It carries out the reaction a plastoquinone + NADPH + (n+1) H(+)(in) = a plastoquinol + NADP(+) + n H(+)(out). Functionally, NDH shuttles electrons from NAD(P)H:plastoquinone, via FMN and iron-sulfur (Fe-S) centers, to quinones in the photosynthetic chain and possibly in a chloroplast respiratory chain. The immediate electron acceptor for the enzyme in this species is believed to be plastoquinone. Couples the redox reaction to proton translocation, and thus conserves the redox energy in a proton gradient. The sequence is that of NAD(P)H-quinone oxidoreductase subunit 1, chloroplastic from Acorus calamus (Sweet flag).